The sequence spans 403 residues: MVTASLPTPVQPEFDTTIHRRKTRPVPVGAVTVGGGHPVVVQSMINEDTLDVDGSVAGIRRLHEIGCEIVRVTVPSMAHAKALADIKQKLQATYQAVPLVADVHHNGMKIALEVAKHVDKVRINPGLYVFEKPDAQREGYSDQEFAEIGEKIRETLEPLVISLRDQGKSMRIGVNHGSLSERMLFTYGDTPEGMVQSALEFIKICESLDFRNLVVSMKASRVPVMLAAYRLMVKRMDELGMDYPLHLGVTEAGDGEYGRIKSTAGIATLLADGIGDTIRVSLTEAPEKEIPVCYSILQALGLRKTMVEYVACPSCGRTLFNLEDVLHEVREATKHLTGLDIAVMGCIVNGPGEMADADYGYVGKQAGYIALYRGREEIKRVPETDGVQELINLIKADGRWVDP.

The [4Fe-4S] cluster site is built by Cys-312, Cys-315, Cys-346, and Glu-353.

The protein belongs to the IspG family. Requires [4Fe-4S] cluster as cofactor.

It carries out the reaction (2E)-4-hydroxy-3-methylbut-2-enyl diphosphate + 2 oxidized [2Fe-2S]-[ferredoxin] + H2O = 2-C-methyl-D-erythritol 2,4-cyclic diphosphate + 2 reduced [2Fe-2S]-[ferredoxin] + H(+). It participates in isoprenoid biosynthesis; isopentenyl diphosphate biosynthesis via DXP pathway; isopentenyl diphosphate from 1-deoxy-D-xylulose 5-phosphate: step 5/6. Its function is as follows. Converts 2C-methyl-D-erythritol 2,4-cyclodiphosphate (ME-2,4cPP) into 1-hydroxy-2-methyl-2-(E)-butenyl 4-diphosphate. In Synechocystis sp. (strain ATCC 27184 / PCC 6803 / Kazusa), this protein is 4-hydroxy-3-methylbut-2-en-1-yl diphosphate synthase (ferredoxin).